Reading from the N-terminus, the 262-residue chain is Thiazole synthase (262 aa).

Lys-96 acts as the Schiff-base intermediate with DXP in catalysis. 1-deoxy-D-xylulose 5-phosphate is bound by residues Gly-157, 184-185, and 206-207; these read AG and NT.

It belongs to the ThiG family. Homotetramer. Forms heterodimers with either ThiH or ThiS.

Its subcellular location is the cytoplasm. The catalysed reaction is [ThiS sulfur-carrier protein]-C-terminal-Gly-aminoethanethioate + 2-iminoacetate + 1-deoxy-D-xylulose 5-phosphate = [ThiS sulfur-carrier protein]-C-terminal Gly-Gly + 2-[(2R,5Z)-2-carboxy-4-methylthiazol-5(2H)-ylidene]ethyl phosphate + 2 H2O + H(+). It participates in cofactor biosynthesis; thiamine diphosphate biosynthesis. Catalyzes the rearrangement of 1-deoxy-D-xylulose 5-phosphate (DXP) to produce the thiazole phosphate moiety of thiamine. Sulfur is provided by the thiocarboxylate moiety of the carrier protein ThiS. In vitro, sulfur can be provided by H(2)S. The chain is Thiazole synthase from Legionella pneumophila (strain Paris).